The chain runs to 83 residues: Phosphoribosylformylglycinamidine synthase subunit PurS (83 aa).

The protein belongs to the PurS family. Homodimer. Part of the FGAM synthase complex composed of 1 PurL, 1 PurQ and 2 PurS subunits.

The protein resides in the cytoplasm. The catalysed reaction is N(2)-formyl-N(1)-(5-phospho-beta-D-ribosyl)glycinamide + L-glutamine + ATP + H2O = 2-formamido-N(1)-(5-O-phospho-beta-D-ribosyl)acetamidine + L-glutamate + ADP + phosphate + H(+). It participates in purine metabolism; IMP biosynthesis via de novo pathway; 5-amino-1-(5-phospho-D-ribosyl)imidazole from N(2)-formyl-N(1)-(5-phospho-D-ribosyl)glycinamide: step 1/2. In terms of biological role, part of the phosphoribosylformylglycinamidine synthase complex involved in the purines biosynthetic pathway. Catalyzes the ATP-dependent conversion of formylglycinamide ribonucleotide (FGAR) and glutamine to yield formylglycinamidine ribonucleotide (FGAM) and glutamate. The FGAM synthase complex is composed of three subunits. PurQ produces an ammonia molecule by converting glutamine to glutamate. PurL transfers the ammonia molecule to FGAR to form FGAM in an ATP-dependent manner. PurS interacts with PurQ and PurL and is thought to assist in the transfer of the ammonia molecule from PurQ to PurL. The sequence is that of Phosphoribosylformylglycinamidine synthase subunit PurS from Methanocaldococcus jannaschii (strain ATCC 43067 / DSM 2661 / JAL-1 / JCM 10045 / NBRC 100440) (Methanococcus jannaschii).